Consider the following 62-residue polypeptide: UPF0434 protein ABO_2103 (62 aa).

This sequence belongs to the UPF0434 family.

The polypeptide is UPF0434 protein ABO_2103 (Alcanivorax borkumensis (strain ATCC 700651 / DSM 11573 / NCIMB 13689 / SK2)).